Consider the following 337-residue polypeptide: UDP-3-O-acylglucosamine N-acyltransferase 1 (337 aa).

H238 serves as the catalytic Proton acceptor.

The protein belongs to the transferase hexapeptide repeat family. LpxD subfamily. In terms of assembly, homotrimer.

The enzyme catalyses a UDP-3-O-[(3R)-3-hydroxyacyl]-alpha-D-glucosamine + a (3R)-hydroxyacyl-[ACP] = a UDP-2-N,3-O-bis[(3R)-3-hydroxyacyl]-alpha-D-glucosamine + holo-[ACP] + H(+). It participates in bacterial outer membrane biogenesis; LPS lipid A biosynthesis. Catalyzes the N-acylation of UDP-3-O-acylglucosamine using 3-hydroxyacyl-ACP as the acyl donor. Is involved in the biosynthesis of lipid A, a phosphorylated glycolipid that anchors the lipopolysaccharide to the outer membrane of the cell. This chain is UDP-3-O-acylglucosamine N-acyltransferase 1, found in Koribacter versatilis (strain Ellin345).